Here is a 360-residue protein sequence, read N- to C-terminus: Protein Wnt-2 (360 aa).

Positions 1–25 (MNSPLRGIWLWLPLLLTWLTPEVSS) are cleaved as a signal peptide. 11 cysteine pairs are disulfide-bonded: Cys-76–Cys-87, Cys-127–Cys-135, Cys-137–Cys-157, Cys-206–Cys-220, Cys-208–Cys-215, Cys-278–Cys-309, Cys-294–Cys-304, Cys-308–Cys-348, Cys-324–Cys-339, Cys-326–Cys-336, and Cys-331–Cys-332. Residue Ser-212 is the site of O-palmitoleoyl serine; by PORCN attachment. Asn-295 carries N-linked (GlcNAc...) asparagine glycosylation.

This sequence belongs to the Wnt family. Post-translationally, palmitoleoylation is required for efficient binding to frizzled receptors. Depalmitoleoylation leads to Wnt signaling pathway inhibition.

It is found in the secreted. Its subcellular location is the extracellular space. It localises to the extracellular matrix. Its function is as follows. Ligand for members of the frizzled family of seven transmembrane receptors. Functions in the canonical Wnt signaling pathway that results in activation of transcription factors of the TCF/LEF family. Functions as a upstream regulator of FGF10 expression. Plays an important role in embryonic lung development. May contribute to embryonic brain development by regulating the proliferation of dopaminergic precursors and neurons. This is Protein Wnt-2 (WNT2) from Callithrix jacchus (White-tufted-ear marmoset).